The following is a 150-amino-acid chain: Truncated transcription factor CAULIFLOWER A (150 aa).

Residues 1-61 (MGRGRVEMKR…GKLFEYSSES (61 aa)) form the MADS-box domain. Residues 90 to 150 (QTNWSMEYSR…IRSRKNQLMH (61 aa)) form the K-box; partial domain.

In terms of assembly, homodimer capable of binding to CArG-box sequences. Expressed in some of the meristems of arrest-stage cauliflower heads.

It localises to the nucleus. Functionally, probable transcription factor that promotes early floral meristem identity in synergy with APETALA1, FRUITFULL and LEAFY. Is required subsequently for the transition of an inflorescence meristem into a floral meristem. Seems to be partially redundant to the function of APETALA1. The sequence is that of Truncated transcription factor CAULIFLOWER A (CAL-A) from Brassica oleracea var. botrytis (Cauliflower).